We begin with the raw amino-acid sequence, 258 residues long: Small ribosomal subunit protein uS2 (258 aa).

Residues 227 to 258 are disordered; sequence GEQFAPASEQKEEVKTQEVQEVEDSNDDVIDD. Positions 235-244 are enriched in basic and acidic residues; that stretch reads EQKEEVKTQE. Positions 246 to 258 are enriched in acidic residues; sequence QEVEDSNDDVIDD.

The protein belongs to the universal ribosomal protein uS2 family.

The sequence is that of Small ribosomal subunit protein uS2 from Caldicellulosiruptor saccharolyticus (strain ATCC 43494 / DSM 8903 / Tp8T 6331).